A 291-amino-acid polypeptide reads, in one-letter code: Probable aquaporin PIP2-4 (291 aa).

Met-1 carries the N-acetylmethionine modification. A disordered region spans residues Met-1–Pro-22. At Ala-2 the chain carries N-acetylalanine; in Probable aquaporin PIP2-4, N-terminally processed. The Cytoplasmic segment spans residues Ala-2–Arg-39. Lys-3 carries the post-translational modification N6,N6-dimethyllysine. The helical transmembrane segment at Ala-40–Ile-60 threads the bilayer. Topologically, residues Gly-61–Asp-74 are extracellular. The chain crosses the membrane as a helical span at residues Cys-75–Val-95. Over Tyr-96–Thr-125 the chain is Cytoplasmic. The short motif at Asn-107–Ala-109 is the NPA 1 element. Residues Val-126–Phe-146 form a helical membrane-spanning segment. The Extracellular portion of the chain corresponds to Gln-147–Lys-167. Residues Gly-168 to Ala-188 traverse the membrane as a helical segment. Residues Thr-189–Pro-201 lie on the Cytoplasmic side of the membrane. Residues Val-202–Ile-222 traverse the membrane as a helical segment. Residues Thr-223–Trp-249 are Extracellular-facing. The short motif at Asn-228–Ala-230 is the NPA 2 element. A helical transmembrane segment spans residues Ile-250–Leu-270. Topologically, residues Arg-271–Ala-291 are cytoplasmic. 3 positions are modified to phosphoserine: Ser-283, Ser-286, and Ser-289.

This sequence belongs to the MIP/aquaporin (TC 1.A.8) family. PIP (TC 1.A.8.11) subfamily. Expressed in roots.

The protein localises to the cell membrane. Functionally, aquaporins facilitate the transport of water and small neutral solutes across cell membranes. In Arabidopsis thaliana (Mouse-ear cress), this protein is Probable aquaporin PIP2-4 (PIP2-4).